The sequence spans 216 residues: UPF0502 protein PFL_4004 (216 aa).

It belongs to the UPF0502 family.

The sequence is that of UPF0502 protein PFL_4004 from Pseudomonas fluorescens (strain ATCC BAA-477 / NRRL B-23932 / Pf-5).